The chain runs to 280 residues: Dexamethasone-induced Ras-related protein 1 (280 aa).

Cys-11 carries the S-nitrosocysteine modification. 31 to 38 lines the GTP pocket; that stretch reads GSSKVGKT. The Effector region signature appears at 53-61; sequence YTPTIEDFH. GTP-binding positions include 78 to 82 and 145 to 148; these read DTSGN and NKGD. Cys-277 carries the post-translational modification Cysteine methyl ester. Cys-277 is lipidated: S-farnesyl cysteine. The propeptide at 278-280 is removed in mature form; that stretch reads VIS.

The protein belongs to the small GTPase superfamily. RasD family. Component of a complex, at least composed of APBB1, RASD1/DEXRAS1 and APP. Interacts with APBB1/FE65. Forms a ternary complex with CAPON and NOS1. S-nitrosylation stimulates guanine-nucleotide exchange activity. In terms of tissue distribution, expressed in brain, heart, kidney and liver.

The protein localises to the cell membrane. Its subcellular location is the cytoplasm. It is found in the perinuclear region. It localises to the nucleus. Small GTPase. Negatively regulates the transcription regulation activity of the APBB1/FE65-APP complex via its interaction with APBB1/FE65. In Mus musculus (Mouse), this protein is Dexamethasone-induced Ras-related protein 1 (Rasd1).